Here is a 158-residue protein sequence, read N- to C-terminus: NADH-quinone oxidoreductase subunit B 1 (158 aa).

[4Fe-4S] cluster contacts are provided by C37, C38, C102, and C132.

Belongs to the complex I 20 kDa subunit family. As to quaternary structure, NDH-1 is composed of 14 different subunits. Subunits NuoB, C, D, E, F, and G constitute the peripheral sector of the complex. The cofactor is [4Fe-4S] cluster.

The protein localises to the cell inner membrane. It carries out the reaction a quinone + NADH + 5 H(+)(in) = a quinol + NAD(+) + 4 H(+)(out). Functionally, NDH-1 shuttles electrons from NADH, via FMN and iron-sulfur (Fe-S) centers, to quinones in the respiratory chain. Couples the redox reaction to proton translocation (for every two electrons transferred, four hydrogen ions are translocated across the cytoplasmic membrane), and thus conserves the redox energy in a proton gradient. The sequence is that of NADH-quinone oxidoreductase subunit B 1 from Azoarcus sp. (strain BH72).